Reading from the N-terminus, the 290-residue chain is Ankyrin repeat and SOCS box protein 9 (290 aa).

At methionine 1 the chain carries N-acetylmethionine. Positions 1–11 are enriched in basic and acidic residues; sequence MDGEQRGRSDR. Residues 1 to 20 are disordered; that stretch reads MDGEQRGRSDRPGGSPHLPF. ANK repeat units lie at residues 31 to 60, 64 to 93, 97 to 126, 129 to 158, 162 to 191, and 194 to 223; these read SDWS…PVNI, DHVS…QVNG, DWRT…TPHP, ELAS…NIDY, HLGT…SVNQ, and GLDS…NAQA. Positions 236 to 290 constitute an SOCS box domain; sequence PLESPLIQIFLQNEGPQSLRQLCRLRIRKCFGIRQHHKISELLLPEDLKRFLLHL.

Belongs to the ankyrin SOCS box (ASB) family. Substrate-recognition component of the ECS(ASB9) complex, composed of ASB9, CUL5, ELOB, ELOC and RNF7/RBX2.

It is found in the mitochondrion. The protein operates within protein modification; protein ubiquitination. Substrate-recognition component of a cullin-5-RING E3 ubiquitin-protein ligase complex (ECS complex, also named CRL5 complex), which mediates the ubiquitination and subsequent proteasomal degradation of target proteins. The ECS(ASB9) complex catalyzes ubiquitination of creatine kinases CKB and CKMT1A. This chain is Ankyrin repeat and SOCS box protein 9, found in Mus musculus (Mouse).